Here is a 417-residue protein sequence, read N- to C-terminus: Glutamate-1-semialdehyde 2,1-aminomutase (417 aa).

Lys-267 carries the N6-(pyridoxal phosphate)lysine modification.

This sequence belongs to the class-III pyridoxal-phosphate-dependent aminotransferase family. HemL subfamily. As to quaternary structure, homodimer. Requires pyridoxal 5'-phosphate as cofactor.

Its subcellular location is the cytoplasm. The enzyme catalyses (S)-4-amino-5-oxopentanoate = 5-aminolevulinate. It functions in the pathway porphyrin-containing compound metabolism; protoporphyrin-IX biosynthesis; 5-aminolevulinate from L-glutamyl-tRNA(Glu): step 2/2. The sequence is that of Glutamate-1-semialdehyde 2,1-aminomutase from Solibacter usitatus (strain Ellin6076).